Consider the following 304-residue polypeptide: Non-specific ribonucleoside hydrolase RihC (304 aa).

The active site involves H233.

Belongs to the IUNH family. RihC subfamily.

Functionally, hydrolyzes both purine and pyrimidine ribonucleosides with a broad-substrate specificity. This is Non-specific ribonucleoside hydrolase RihC from Escherichia coli O7:K1 (strain IAI39 / ExPEC).